Reading from the N-terminus, the 567-residue chain is Phosphoglucomutase-like protein 5 (567 aa).

Residues 1 to 26 (MEGSPIPVLTVPTAPYEDQRPTGGGG) are disordered. Residue Thr120 is modified to Phosphothreonine. Ser122 carries the phosphoserine modification.

Belongs to the phosphohexose mutase family. In terms of assembly, interacts with DMD/dystrophin; the interaction is direct. Interacts with UTRN/utrophin.

Its subcellular location is the cell junction. It is found in the adherens junction. The protein localises to the cytoplasm. It localises to the cytoskeleton. The protein resides in the cell membrane. Its subcellular location is the sarcolemma. Component of adherens-type cell-cell and cell-matrix junctions. Has no phosphoglucomutase activity in vitro. In Rattus norvegicus (Rat), this protein is Phosphoglucomutase-like protein 5.